A 183-amino-acid polypeptide reads, in one-letter code: Translocon-associated protein subunit beta (183 aa).

An N-terminal signal peptide occupies residues Met1–Ala17. The Lumenal portion of the chain corresponds to Glu18 to Asp149. N-linked (GlcNAc...) asparagine glycosylation is found at Asn88 and Asn104. A helical membrane pass occupies residues Trp150–Tyr169. The Cytoplasmic segment spans residues Ser170–Asn183.

This sequence belongs to the TRAP-beta family. In terms of assembly, heterotetramer of TRAP-alpha, TRAP-beta, TRAP-delta and TRAP-gamma. Interacts with STING1.

The protein localises to the endoplasmic reticulum membrane. TRAP proteins are part of a complex whose function is to bind calcium to the ER membrane and thereby regulate the retention of ER resident proteins. The chain is Translocon-associated protein subunit beta (SSR2) from Canis lupus familiaris (Dog).